We begin with the raw amino-acid sequence, 90 residues long: Small ribosomal subunit protein uS17 (90 aa).

This sequence belongs to the universal ribosomal protein uS17 family. Part of the 30S ribosomal subunit.

In terms of biological role, one of the primary rRNA binding proteins, it binds specifically to the 5'-end of 16S ribosomal RNA. This is Small ribosomal subunit protein uS17 from Gluconobacter oxydans (strain 621H) (Gluconobacter suboxydans).